Reading from the N-terminus, the 821-residue chain is Epidermal growth factor receptor kinase substrate 8 (821 aa).

2 stretches are compositionally biased toward polar residues: residues 1–10 (MNGHMSNRSS) and 17–28 (SQLNGYGSSPPY). A disordered region spans residues 1–39 (MNGHMSNRSSGYGVYPSQLNGYGSSPPYSQMDREHSSRT). Ser58 is subject to Phosphoserine. Positions 64–194 (QYRVEHLTTF…SDSKGGKQKR (131 aa)) constitute a PTB domain. Disordered regions lie at residues 204–224 (KADP…PGTV), 295–320 (SELS…TLRA), and 461–525 (ANAE…RNYD). The span at 208 to 221 (GIPPPPRAPAPVPP) shows a compositional bias: pro residues. Phosphothreonine is present on Thr223. A compositionally biased stretch (basic residues) spans 299–309 (KRKKSKKSKRK). Thr317 carries the phosphothreonine modification. The span at 464–476 (EHQRKQDSKRLST) shows a compositional bias: basic and acidic residues. Ser475 bears the Phosphoserine mark. Positions 530–589 (QPKKYAKSKYDFVARNSSELSVMKDDVLEILDDRRQWWKVRNASGDSGFVPNNILDIMRT) constitute an SH3 domain. Residues 610–683 (TEYGLRSADT…YKQLPVDRRK (74 aa)) are disordered. Positions 622 to 641 (APSPPPTPAPVPVPLPPSVP) are enriched in pro residues. Position 624 is a phosphoserine; by MAPK (Ser624). Residue Thr628 is modified to Phosphothreonine; by MAPK. The segment covering 642 to 651 (APVSVPKVPA) has biased composition (low complexity). Residues 648 to 821 (KVPANVTRQN…VESFDEGSSH (174 aa)) form an effector region region. Phosphoserine occurs at positions 658 and 661. Residues 670–683 (DSQRYKQLPVDRRK) are compositionally biased toward basic and acidic residues. Residues 679-697 (VDRRKSQMEEVQDELFQRL) form an amphipathic helix region. Ser684 bears the Phosphoserine mark. Helix bundle regions lie at residues 717–737 (VINI…QSKG), 751–756 (GAQLFS), 761–766 (ELRSVC), and 765–784 (VCPE…AALE). The tract at residues 800–821 (QEKISAAASDSGVESFDEGSSH) is disordered. Ser810 and Ser814 each carry phosphoserine.

It belongs to the EPS8 family. As to quaternary structure, homodimer. Part of a complex consisting of ABI1, EPS8 and SOS1. Interacts with BAIAP2. Interacts with SHB and LANCL1. Interacts with EGFR; mediates EPS8 phosphorylation. Interacts with MYO15A and WHRN. Ubiquitinated by the SCF(FBXW5) E3 ubiquitin-protein ligase complex during G2 phase, leading to its transient degradation and subsequent cell shape changes required to allow mitotic progression. Reappears at the midzone of dividing cells. Post-translationally, phosphorylation at Ser-624 and Thr-628 by MAPK following BDNF treatment promotes removal from actin and filopodia formation. Phosphorylated by several receptor tyrosine kinases. As to expression, expressed in neuronal cell body and neurites, and prominently enriched in the axonal growth cone. Expressed at the tips of cochlear hair cells stereocilia.

The protein localises to the cytoplasm. It is found in the cell cortex. The protein resides in the cell projection. Its subcellular location is the ruffle membrane. It localises to the growth cone. The protein localises to the stereocilium. It is found in the synapse. The protein resides in the synaptosome. Functionally, signaling adapter that controls various cellular protrusions by regulating actin cytoskeleton dynamics and architecture. Depending on its association with other signal transducers, can regulate different processes. Together with SOS1 and ABI1, forms a trimeric complex that participates in transduction of signals from Ras to Rac by activating the Rac-specific guanine nucleotide exchange factor (GEF) activity. Acts as a direct regulator of actin dynamics by binding actin filaments and has both barbed-end actin filament capping and actin bundling activities depending on the context. Displays barbed-end actin capping activity when associated with ABI1, thereby regulating actin-based motility process: capping activity is auto-inhibited and inhibition is relieved upon ABI1 interaction. Also shows actin bundling activity when associated with BAIAP2, enhancing BAIAP2-dependent membrane extensions and promoting filopodial protrusions. Involved in the regulation of processes such as axonal filopodia growth, stereocilia length, dendritic cell migration and cancer cell migration and invasion. Acts as a regulator of axonal filopodia formation in neurons: in the absence of neurotrophic factors, negatively regulates axonal filopodia formation via actin-capping activity. In contrast, it is phosphorylated in the presence of BDNF leading to inhibition of its actin-capping activity and stimulation of filopodia formation. Component of a complex with WHRN and MYO15A that localizes at stereocilia tips and is required for elongation of the stereocilia actin core. Indirectly involved in cell cycle progression; its degradation following ubiquitination being required during G2 phase to promote cell shape changes. This is Epidermal growth factor receptor kinase substrate 8 (Eps8) from Mus musculus (Mouse).